The following is a 576-amino-acid chain: Deformed epidermal autoregulatory factor 1 (576 aa).

Disordered regions lie at residues 52–76 (VTSS…GGGN), 189–215 (AGGA…NPST), and 309–362 (ESAS…SGSG). Gly residues-rich tracts occupy residues 61–76 (GSGG…GGGN) and 191–207 (GASG…GGSS). The 82-residue stretch at 210–291 (SENPSTQHNE…QSLIDEGTLT (82 aa)) folds into the SAND domain. A Nuclear localization signal motif is present at residues 324–340 (RKRNQTDLDMESGPKRK). The segment covering 345–362 (HSNNNNSNTNNNNTSGSG) has biased composition (low complexity). Zn(2+) contacts are provided by Cys521, Cys524, Cys532, Cys535, Cys541, Cys545, His553, and Cys557. The segment at 521 to 557 (CANCNREALAECSLCRKTPYCSEFCQRKDWNAHQVEC) adopts an MYND-type zinc-finger fold.

Its subcellular location is the nucleus. Its function is as follows. Transcription factor that binds the homeotic Deformed (Dfd) response element. High affinity binding sites contain at least 1 TTCG motif surrounded by additional TCG sequences. May be involved in the selective action of Dfd on these sites without binding directly to the Dfd protein. Requirement of DEAF1 activity may be a common feature of enhancers targeted by Dfd. The sequence is that of Deformed epidermal autoregulatory factor 1 (Deaf1) from Drosophila melanogaster (Fruit fly).